A 434-amino-acid polypeptide reads, in one-letter code: Vi polysaccharide export inner-membrane protein VexD (434 aa).

A compositionally biased stretch (basic and acidic residues) spans 1-50 (MENSERIKKWKEERAKVAQESRASRLQQKEDERALRQTEKSADAKSHHNP). The disordered stretch occupies residues 1-58 (MENSERIKKWKEERAKVAQESRASRLQQKEDERALRQTEKSADAKSHHNPDAGWSATD). The next 2 membrane-spanning stretches (helical) occupy residues 84-104 (LFLY…ILTS) and 409-429 (WLLF…LITI).

Belongs to the BexC/CtrB/KpsE family.

It localises to the cell inner membrane. In terms of biological role, may form an ATP-driven capsule polysaccharide export apparatus, in association with the VexA, VexB and VexC proteins. In Salmonella typhi, this protein is Vi polysaccharide export inner-membrane protein VexD (vexD).